The chain runs to 104 residues: Inclusion membrane protein F (104 aa).

2 helical membrane passes run 39-59 (LVVALAALVLNGALCVLSLVA) and 70-90 (LAVLVATTLASFLCAACVLFI).

It is found in the secreted. The protein resides in the host vacuole. Its subcellular location is the host pathogen-containing vacuole. The protein localises to the host pathogen-containing vacuole membrane. Inclusion membrane protein probably involved in early modification events of the chlamydial inclusion. This Chlamydia trachomatis serovar D (strain ATCC VR-885 / DSM 19411 / UW-3/Cx) protein is Inclusion membrane protein F (incF).